Consider the following 1367-residue polypeptide: Insulin-like growth factor 1 receptor (1367 aa).

Positions 1–30 (MKSGSGGGSPTSLWGLLFLSAALSLWPTSG) are cleaved as a signal peptide. Cys-33 and Cys-52 are disulfide-bonded. 3 N-linked (GlcNAc...) asparagine glycosylation sites follow: Asn-51, Asn-102, and Asn-135. 13 disulfide bridges follow: Cys-150–Cys-178, Cys-182–Cys-205, Cys-192–Cys-211, Cys-215–Cys-224, Cys-219–Cys-230, Cys-231–Cys-239, Cys-235–Cys-248, Cys-251–Cys-260, Cys-264–Cys-276, Cys-282–Cys-303, Cys-307–Cys-321, Cys-324–Cys-328, and Cys-332–Cys-353. N-linked (GlcNAc...) asparagine glycosylation occurs at Asn-244. A glycan (N-linked (GlcNAc...) asparagine) is linked at Asn-314. Residues Asn-417 and Asn-438 are each glycosylated (N-linked (GlcNAc...) asparagine). Cys-455 and Cys-488 form a disulfide bridge. 4 consecutive Fibronectin type-III domains span residues 491-609 (DVLH…TNAS), 610-708 (VPSI…TEAE), 735-828 (PERK…TMPA), and 834-927 (IPGP…VQAK). 9 N-linked (GlcNAc...) asparagine glycosylation sites follow: Asn-534, Asn-607, Asn-622, Asn-640, Asn-747, Asn-756, Asn-764, Asn-900, and Asn-913. At 741-935 (DVMQVANTTM…AKTGYENFIH (195 aa)) the chain is on the extracellular side. A helical membrane pass occupies residues 936–959 (LIIALPVAVLLIVGGLVIMLYVFH). The Cytoplasmic segment spans residues 960 to 1367 (RKRNNSRLGN…ALPLPQSSTC (408 aa)). The IRS1- and SHC1-binding signature appears at 977–980 (NPEY). Tyr-980 bears the Phosphotyrosine mark. The Protein kinase domain maps to 999-1274 (ITMSRELGQG…SIKEEMEPGF (276 aa)). ATP contacts are provided by residues 1005 to 1013 (LGQGSFGMV) and Lys-1033. Residue Asp-1135 is the Proton acceptor of the active site. Tyr-1161, Tyr-1165, and Tyr-1166 each carry phosphotyrosine; by autocatalysis. Glycyl lysine isopeptide (Lys-Gly) (interchain with G-Cter in ubiquitin) cross-links involve residues Lys-1168 and Lys-1171. Ser-1278 carries the post-translational modification Phosphoserine; by GSK3-beta. Phosphoserine is present on Ser-1282. The segment at 1288-1367 (PEPEELDLEP…ALPLPQSSTC (80 aa)) is disordered. The span at 1290 to 1299 (PEELDLEPEN) shows a compositional bias: acidic residues. The span at 1300 to 1316 (MESVPLDPSASSSSLPL) shows a compositional bias: low complexity. Residues 1317-1326 (PDRHSGHKAE) show a composition bias toward basic and acidic residues.

This sequence belongs to the protein kinase superfamily. Tyr protein kinase family. Insulin receptor subfamily. In terms of assembly, tetramer of 2 alpha and 2 beta chains linked by disulfide bonds. The alpha chains contribute to the formation of the ligand-binding domain, while the beta chain carries the kinase domain. Interacts with PIK3R1 and with the PTB/PID domains of IRS1 and SHC1 in vitro when autophosphorylated on tyrosine residues. Forms a hybrid receptor with INSR, the hybrid is a tetramer consisting of 1 alpha chain and 1 beta chain of INSR and 1 alpha chain and 1 beta chain of IGF1R. Interacts with ARRB1 and ARRB2. Interacts with GRB10. Interacts with RACK1. Interacts with SOCS1, SOCS2 and SOCS3. Interacts with 14-3-3 proteins. Interacts with NMD2. Interacts with MAP3K5. Interacts with STAT3. Found in a ternary complex with IGF1 and ITGAV:ITGB3 or ITGA6:ITGB4. Interacts (nascent precursor form) with ZFAND2B. (Microbial infection) Interacts with human respiratory syncytial virus (HRSV) fusion glycoprotein F1/F2 heterodimer. Autophosphorylated on tyrosine residues in response to ligand binding. Autophosphorylation occurs in trans, i.e. one subunit of the dimeric receptor phosphorylates tyrosine residues on the other subunit. Autophosphorylation occurs in a sequential manner; Tyr-1165 is predominantly phosphorylated first, followed by phosphorylation of Tyr-1161 and Tyr-1166. While every single phosphorylation increases kinase activity, all three tyrosine residues in the kinase activation loop (Tyr-1165, Tyr-1161 and Tyr-1166) have to be phosphorylated for optimal activity. Can be autophosphorylated at additional tyrosine residues (in vitro). Autophosphorylated is followed by phosphorylation of juxtamembrane tyrosines and C-terminal serines. May also be phosphorylated at Tyr-1161 and Tyr-1166 by mTORC2. Phosphorylation of Tyr-980 is required for IRS1- and SHC1-binding. Phosphorylation of Ser-1278 by GSK-3beta restrains kinase activity and promotes cell surface expression, it requires a priming phosphorylation at Ser-1282. Dephosphorylated by PTPN1. Post-translationally, polyubiquitinated at Lys-1168 and Lys-1171 through both 'Lys-48' and 'Lys-29' linkages, promoting receptor endocytosis and subsequent degradation by the proteasome. Ubiquitination is facilitated by pre-existing phosphorylation. In terms of processing, sumoylated with SUMO1. Controlled by regulated intramembrane proteolysis (RIP). Undergoes metalloprotease-dependent constitutive ectodomain shedding to produce a membrane-anchored 52 kDa C-Terminal fragment which is further processed by presenilin gamma-secretase to yield an intracellular 50 kDa fragment. Found as a hybrid receptor with INSR in muscle, heart, kidney, adipose tissue, skeletal muscle, hepatoma, fibroblasts, spleen and placenta (at protein level). Expressed in a variety of tissues. Overexpressed in tumors, including melanomas, cancers of the colon, pancreas prostate and kidney.

It localises to the cell membrane. The enzyme catalyses L-tyrosyl-[protein] + ATP = O-phospho-L-tyrosyl-[protein] + ADP + H(+). Activated by autophosphorylation at Tyr-1165, Tyr-1161 and Tyr-1166 on the kinase activation loop; phosphorylation at all three tyrosine residues is required for optimal kinase activity. Inhibited by MSC1609119A-1, BMS-754807, PQIP, benzimidazole pyridinone, isoquinolinedione, bis-azaindole, 3-cyanoquinoline, 2,4-bis-arylamino-1,3-pyrimidine, pyrrolopyrimidine, pyrrole-5-carboxaldehyde, picropodophyllin (PPP), tyrphostin derivatives. While most inhibitors bind to the ATP binding pocket, MSC1609119A-1 functions as allosteric inhibitor and binds close to the DFG motif and the activation loop. In terms of biological role, receptor tyrosine kinase which mediates actions of insulin-like growth factor 1 (IGF1). Binds IGF1 with high affinity and IGF2 and insulin (INS) with a lower affinity. The activated IGF1R is involved in cell growth and survival control. IGF1R is crucial for tumor transformation and survival of malignant cell. Ligand binding activates the receptor kinase, leading to receptor autophosphorylation, and tyrosines phosphorylation of multiple substrates, that function as signaling adapter proteins including, the insulin-receptor substrates (IRS1/2), Shc and 14-3-3 proteins. Phosphorylation of IRSs proteins lead to the activation of two main signaling pathways: the PI3K-AKT/PKB pathway and the Ras-MAPK pathway. The result of activating the MAPK pathway is increased cellular proliferation, whereas activating the PI3K pathway inhibits apoptosis and stimulates protein synthesis. Phosphorylated IRS1 can activate the 85 kDa regulatory subunit of PI3K (PIK3R1), leading to activation of several downstream substrates, including protein AKT/PKB. AKT phosphorylation, in turn, enhances protein synthesis through mTOR activation and triggers the antiapoptotic effects of IGFIR through phosphorylation and inactivation of BAD. In parallel to PI3K-driven signaling, recruitment of Grb2/SOS by phosphorylated IRS1 or Shc leads to recruitment of Ras and activation of the ras-MAPK pathway. In addition to these two main signaling pathways IGF1R signals also through the Janus kinase/signal transducer and activator of transcription pathway (JAK/STAT). Phosphorylation of JAK proteins can lead to phosphorylation/activation of signal transducers and activators of transcription (STAT) proteins. In particular activation of STAT3, may be essential for the transforming activity of IGF1R. The JAK/STAT pathway activates gene transcription and may be responsible for the transforming activity. JNK kinases can also be activated by the IGF1R. IGF1 exerts inhibiting activities on JNK activation via phosphorylation and inhibition of MAP3K5/ASK1, which is able to directly associate with the IGF1R. When present in a hybrid receptor with INSR, binds IGF1. PubMed:12138094 shows that hybrid receptors composed of IGF1R and INSR isoform Long are activated with a high affinity by IGF1, with low affinity by IGF2 and not significantly activated by insulin, and that hybrid receptors composed of IGF1R and INSR isoform Short are activated by IGF1, IGF2 and insulin. In contrast, PubMed:16831875 shows that hybrid receptors composed of IGF1R and INSR isoform Long and hybrid receptors composed of IGF1R and INSR isoform Short have similar binding characteristics, both bind IGF1 and have a low affinity for insulin. The chain is Insulin-like growth factor 1 receptor (IGF1R) from Homo sapiens (Human).